The following is a 389-amino-acid chain: POU domain, class 5, transcription factor 3 (389 aa).

Low complexity-rich tracts occupy residues 1–18 (MFSP…LLPD) and 145–165 (LANL…GHSS). 2 disordered regions span residues 1-88 (MFSP…APPA) and 145-177 (LANL…TSEE). Positions 167-177 (SGDEDAPTSEE) are enriched in acidic residues. Residues 170–244 (EDAPTSEELE…LLQRWLNEAE (75 aa)) form the POU-specific domain. The segment at residues 264-323 (KRKRRTSIETNVKGTLESFFRKCVKPSPQEISQIAEDLNLDKDVVRVWFCNRRQKGKRLL) is a DNA-binding region (homeobox).

This sequence belongs to the POU transcription factor family.

The protein localises to the nucleus. In terms of biological role, required for the maintenance of pluripotency and self-renewal of embryonic stem cells. Transcriptional activator that binds the DNA consensus sequence 5'-ATGCAAAT-3'. The polypeptide is POU domain, class 5, transcription factor 3 (POU5F3) (Gallus gallus (Chicken)).